The sequence spans 349 residues: MVRAKRKLDHIEYALSTGQSRTHGFHDIDFVHQSLPNSNYDTITCETKIGELSLSSPIFINAMTGGGGEKTLHINEQLAYVAKHHNLAMAVGSQMAALKDESEAASYKIIRKVNPNGIFFANLGSEATVEQAERAVDMVEANALQIHLNVIQELTMPEGDRDFTGVLQRIEKIVLNSKVPVIVKEVGFGMSKETMQQLASVGVTAIDIGGQGGTNFAAVENERRQRMLSYFNNWGIQTATSIIEATSTNNNLSFIASGGIQTALDVAKAIALGANTTAFAGYFLRILMQDGIEKLVDEIDLLHADLKFIMTALGAKTIEELQSVPLVVKGETYHWLTQRGIDTTHYSRR.

6 to 7 (RK) lines the substrate pocket. FMN is bound by residues 62–64 (AMT), S93, and N122. Q152 is a substrate binding site. E153 is a Mg(2+) binding site. FMN-binding positions include K184, T214, 258–259 (GG), and 280–281 (AG).

Belongs to the IPP isomerase type 2 family. Homooctamer. Dimer of tetramers. FMN is required as a cofactor. The cofactor is NADPH. Requires Mg(2+) as cofactor.

It localises to the cytoplasm. The enzyme catalyses isopentenyl diphosphate = dimethylallyl diphosphate. Its function is as follows. Involved in the biosynthesis of isoprenoids. Catalyzes the 1,3-allylic rearrangement of the homoallylic substrate isopentenyl (IPP) to its allylic isomer, dimethylallyl diphosphate (DMAPP). The chain is Isopentenyl-diphosphate delta-isomerase from Bacillus cereus (strain AH187).